The sequence spans 620 residues: 1-deoxy-D-xylulose-5-phosphate synthase (620 aa).

Thiamine diphosphate contacts are provided by residues His80 and 121–123; that span reads GHS. Residue Asp152 coordinates Mg(2+). Thiamine diphosphate is bound by residues 153–154, Asn181, Tyr288, and Glu370; that span reads GA. Asn181 is a Mg(2+) binding site.

It belongs to the transketolase family. DXPS subfamily. As to quaternary structure, homodimer. It depends on Mg(2+) as a cofactor. Thiamine diphosphate is required as a cofactor.

The enzyme catalyses D-glyceraldehyde 3-phosphate + pyruvate + H(+) = 1-deoxy-D-xylulose 5-phosphate + CO2. It functions in the pathway metabolic intermediate biosynthesis; 1-deoxy-D-xylulose 5-phosphate biosynthesis; 1-deoxy-D-xylulose 5-phosphate from D-glyceraldehyde 3-phosphate and pyruvate: step 1/1. Catalyzes the acyloin condensation reaction between C atoms 2 and 3 of pyruvate and glyceraldehyde 3-phosphate to yield 1-deoxy-D-xylulose-5-phosphate (DXP). The protein is 1-deoxy-D-xylulose-5-phosphate synthase of Salmonella choleraesuis (strain SC-B67).